The sequence spans 261 residues: Methyl jasmonate esterase 1 (261 aa).

Residues 8–251 (FVLVHGACHG…MFSKPLDLCA (244 aa)) form the AB hydrolase-1 domain. The active-site Acyl-ester intermediate is S82. Active-site charge relay system residues include D211 and H239.

It belongs to the AB hydrolase superfamily. Methylesterase family. In terms of assembly, homodimer.

It carries out the reaction methyl (-)-jasmonate + H2O = jasmonate + methanol + H(+). It catalyses the reaction methyl salicylate + H2O = salicylate + methanol + H(+). Its pathway is plant hormone biosynthesis. The protein operates within lipid metabolism; oxylipin biosynthesis. Methylesterase that catalyzes the hydrolysis of methyl jasmonate (MeJA) into jasmonate (JA). Can also use methyl salicylate (MeSA) as substrate with a lower efficiency. The polypeptide is Methyl jasmonate esterase 1 (Vitis vinifera (Grape)).